Here is a 107-residue protein sequence, read N- to C-terminus: Iron-binding protein IscA (107 aa).

Fe cation-binding residues include C35, C99, and C101.

This sequence belongs to the HesB/IscA family. In terms of assembly, homodimer; may form tetramers and higher multimers. Fe cation is required as a cofactor.

In terms of biological role, is able to transfer iron-sulfur clusters to apo-ferredoxin. Multiple cycles of [2Fe2S] cluster formation and transfer are observed, suggesting that IscA acts catalytically. Recruits intracellular free iron so as to provide iron for the assembly of transient iron-sulfur cluster in IscU in the presence of IscS, L-cysteine and the thioredoxin reductase system TrxA/TrxB. This chain is Iron-binding protein IscA, found in Pectobacterium carotovorum subsp. carotovorum (strain PC1).